Consider the following 272-residue polypeptide: Probable nitrilase C965.09 (272 aa).

In terms of domain architecture, CN hydrolase spans 3–244; it reads ANIACVQMAP…EGVISYTVDL (242 aa). The active-site Proton acceptor is Glu-45. Lys-118 (proton donor) is an active-site residue. The Nucleophile role is filled by Cys-150.

The protein belongs to the carbon-nitrogen hydrolase superfamily.

It is found in the cytoplasm. It localises to the nucleus. The sequence is that of Probable nitrilase C965.09 from Schizosaccharomyces pombe (strain 972 / ATCC 24843) (Fission yeast).